Reading from the N-terminus, the 348-residue chain is MAIILAIETSCDETAVAIVNNRNVCSNVVSSQIQTHQIFGGVVPEVASRQHLLLINTCLDQALQASGLGWPEIEAIAVTVAPGLAGALMVGVTAAKTLAMVHQKPFLGVHHLEGHIYASYLSQPDLQPPFLCLLVSGGHTSLIHVKGCGDYRQLGTTRDDAAGEAFDKVARLLDLGYPGGPAIDRAAKQGDPGTFKLPEGKISLPQGGYHPYDSSFSGLKTAMLRLTQELKQSSAPLPVDDLAASFQDTVARSLTKKTIQCVLDHGLTTITVGGGVAANSRLRYHLQTAAQEHQLQVFFPPLKFCTDNAAMIACAAADHFQNGDRSPLTLGVQSRLSVEQVSQLYERN.

Fe cation-binding residues include His-111 and His-115. Substrate-binding positions include 134-138 (LVSGG), Asp-167, Gly-180, Asp-184, and Asn-279. Asp-307 lines the Fe cation pocket.

The protein belongs to the KAE1 / TsaD family. Requires Fe(2+) as cofactor.

It localises to the cytoplasm. The catalysed reaction is L-threonylcarbamoyladenylate + adenosine(37) in tRNA = N(6)-L-threonylcarbamoyladenosine(37) in tRNA + AMP + H(+). Its function is as follows. Required for the formation of a threonylcarbamoyl group on adenosine at position 37 (t(6)A37) in tRNAs that read codons beginning with adenine. Is involved in the transfer of the threonylcarbamoyl moiety of threonylcarbamoyl-AMP (TC-AMP) to the N6 group of A37, together with TsaE and TsaB. TsaD likely plays a direct catalytic role in this reaction. In Synechocystis sp. (strain ATCC 27184 / PCC 6803 / Kazusa), this protein is tRNA N6-adenosine threonylcarbamoyltransferase.